Reading from the N-terminus, the 689-residue chain is Elongation factor G (689 aa).

Positions 8–282 constitute a tr-type G domain; that stretch reads DKVRNIGIMA…AIVRYLPSPL (275 aa). GTP is bound by residues 17–24, 81–85, and 135–138; these read AHIDAGKT, DTPGH, and NKMD.

Belongs to the TRAFAC class translation factor GTPase superfamily. Classic translation factor GTPase family. EF-G/EF-2 subfamily.

It localises to the cytoplasm. Its function is as follows. Catalyzes the GTP-dependent ribosomal translocation step during translation elongation. During this step, the ribosome changes from the pre-translocational (PRE) to the post-translocational (POST) state as the newly formed A-site-bound peptidyl-tRNA and P-site-bound deacylated tRNA move to the P and E sites, respectively. Catalyzes the coordinated movement of the two tRNA molecules, the mRNA and conformational changes in the ribosome. In Thermoanaerobacter pseudethanolicus (strain ATCC 33223 / 39E) (Clostridium thermohydrosulfuricum), this protein is Elongation factor G.